The following is a 1026-amino-acid chain: Multidrug resistance protein MdtC (1026 aa).

The next 11 helical transmembrane spans lie at 15-35, 333-353, 360-380, 387-407, 431-451, 463-483, 528-548, 853-873, 897-917, 953-973, and 984-1004; these read ILIAAAITLCGILGFRLLPVA, EVEETLAISVALVILVVFLFL, LIPAVAVPVSLIGTFAAMYLC, LSLMALTIATGFVVDDAIVVL, VGFTVISMSLSLVAVFLPLLL, FAVTLSVAIGISLVVSLTLTP, LVGVVFLGTVALNIWLYIAIP, LILIVAAIATVYIVLGILYES, LFNAPFSLIALIGIMLLIGIV, PIMMTTLAALFGALPLVLSGG, and ITIVGGLVMSQLLTLYTTPVV.

This sequence belongs to the resistance-nodulation-cell division (RND) (TC 2.A.6) family. MdtC subfamily. In terms of assembly, part of a tripartite efflux system composed of MdtA, MdtB and MdtC. MdtC forms a heteromultimer with MdtB.

The protein localises to the cell inner membrane. This Salmonella newport (strain SL254) protein is Multidrug resistance protein MdtC.